The sequence spans 341 residues: Phosphoribosylformylglycinamidine cyclo-ligase (341 aa).

The protein belongs to the AIR synthase family.

The protein localises to the cytoplasm. It catalyses the reaction 2-formamido-N(1)-(5-O-phospho-beta-D-ribosyl)acetamidine + ATP = 5-amino-1-(5-phospho-beta-D-ribosyl)imidazole + ADP + phosphate + H(+). It participates in purine metabolism; IMP biosynthesis via de novo pathway; 5-amino-1-(5-phospho-D-ribosyl)imidazole from N(2)-formyl-N(1)-(5-phospho-D-ribosyl)glycinamide: step 2/2. In Caldicellulosiruptor bescii (strain ATCC BAA-1888 / DSM 6725 / KCTC 15123 / Z-1320) (Anaerocellum thermophilum), this protein is Phosphoribosylformylglycinamidine cyclo-ligase.